Consider the following 158-residue polypeptide: Oocyte-secreted protein 2 (158 aa).

The first 17 residues, 1 to 17, serve as a signal peptide directing secretion; that stretch reads MALEVLMLLAVLIWTGA.

The protein belongs to the PLAC1 family. In terms of tissue distribution, highly expressed in oocytes.

It localises to the secreted. Its subcellular location is the cytoplasm. In terms of biological role, involved in oocyte maturation. This Homo sapiens (Human) protein is Oocyte-secreted protein 2 (OOSP2).